A 143-amino-acid polypeptide reads, in one-letter code: Large ribosomal subunit protein uL11 (143 aa).

This sequence belongs to the universal ribosomal protein uL11 family. Part of the ribosomal stalk of the 50S ribosomal subunit. Interacts with L10 and the large rRNA to form the base of the stalk. L10 forms an elongated spine to which L12 dimers bind in a sequential fashion forming a multimeric L10(L12)X complex. Post-translationally, one or more lysine residues are methylated.

Its function is as follows. Forms part of the ribosomal stalk which helps the ribosome interact with GTP-bound translation factors. In Kocuria rhizophila (strain ATCC 9341 / DSM 348 / NBRC 103217 / DC2201), this protein is Large ribosomal subunit protein uL11.